The following is a 110-amino-acid chain: Large ribosomal subunit protein uL22 (110 aa).

The protein belongs to the universal ribosomal protein uL22 family. As to quaternary structure, part of the 50S ribosomal subunit.

This protein binds specifically to 23S rRNA; its binding is stimulated by other ribosomal proteins, e.g. L4, L17, and L20. It is important during the early stages of 50S assembly. It makes multiple contacts with different domains of the 23S rRNA in the assembled 50S subunit and ribosome. Functionally, the globular domain of the protein is located near the polypeptide exit tunnel on the outside of the subunit, while an extended beta-hairpin is found that lines the wall of the exit tunnel in the center of the 70S ribosome. The sequence is that of Large ribosomal subunit protein uL22 from Oleidesulfovibrio alaskensis (strain ATCC BAA-1058 / DSM 17464 / G20) (Desulfovibrio alaskensis).